A 316-amino-acid polypeptide reads, in one-letter code: tRNA dimethylallyltransferase (316 aa).

17 to 24 (GPTASGKT) lines the ATP pocket. 19–24 (TASGKT) is a substrate binding site. Interaction with substrate tRNA regions lie at residues 42–45 (DSAL), 166–170 (QRLSR), and 247–252 (RCVGYR).

Belongs to the IPP transferase family. As to quaternary structure, monomer. The cofactor is Mg(2+).

The enzyme catalyses adenosine(37) in tRNA + dimethylallyl diphosphate = N(6)-dimethylallyladenosine(37) in tRNA + diphosphate. Functionally, catalyzes the transfer of a dimethylallyl group onto the adenine at position 37 in tRNAs that read codons beginning with uridine, leading to the formation of N6-(dimethylallyl)adenosine (i(6)A). In Erwinia tasmaniensis (strain DSM 17950 / CFBP 7177 / CIP 109463 / NCPPB 4357 / Et1/99), this protein is tRNA dimethylallyltransferase.